Consider the following 194-residue polypeptide: Leucyl/phenylalanyl-tRNA--protein transferase (194 aa).

It belongs to the L/F-transferase family.

The protein resides in the cytoplasm. It catalyses the reaction N-terminal L-lysyl-[protein] + L-leucyl-tRNA(Leu) = N-terminal L-leucyl-L-lysyl-[protein] + tRNA(Leu) + H(+). The catalysed reaction is N-terminal L-arginyl-[protein] + L-leucyl-tRNA(Leu) = N-terminal L-leucyl-L-arginyl-[protein] + tRNA(Leu) + H(+). The enzyme catalyses L-phenylalanyl-tRNA(Phe) + an N-terminal L-alpha-aminoacyl-[protein] = an N-terminal L-phenylalanyl-L-alpha-aminoacyl-[protein] + tRNA(Phe). Its function is as follows. Functions in the N-end rule pathway of protein degradation where it conjugates Leu, Phe and, less efficiently, Met from aminoacyl-tRNAs to the N-termini of proteins containing an N-terminal arginine or lysine. The protein is Leucyl/phenylalanyl-tRNA--protein transferase of Chlorobium luteolum (strain DSM 273 / BCRC 81028 / 2530) (Pelodictyon luteolum).